The primary structure comprises 186 residues: ATP synthase subunit b (186 aa).

Residues 5 to 25 form a helical membrane-spanning segment; that stretch reads LILNLLVLLAPAAVFAAGGGH.

The protein belongs to the ATPase B chain family. F-type ATPases have 2 components, F(1) - the catalytic core - and F(0) - the membrane proton channel. F(1) has five subunits: alpha(3), beta(3), gamma(1), delta(1), epsilon(1). F(0) has three main subunits: a(1), b(2) and c(10-14). The alpha and beta chains form an alternating ring which encloses part of the gamma chain. F(1) is attached to F(0) by a central stalk formed by the gamma and epsilon chains, while a peripheral stalk is formed by the delta and b chains.

Its subcellular location is the cell inner membrane. In terms of biological role, f(1)F(0) ATP synthase produces ATP from ADP in the presence of a proton or sodium gradient. F-type ATPases consist of two structural domains, F(1) containing the extramembraneous catalytic core and F(0) containing the membrane proton channel, linked together by a central stalk and a peripheral stalk. During catalysis, ATP synthesis in the catalytic domain of F(1) is coupled via a rotary mechanism of the central stalk subunits to proton translocation. Its function is as follows. Component of the F(0) channel, it forms part of the peripheral stalk, linking F(1) to F(0). The protein is ATP synthase subunit b of Bdellovibrio bacteriovorus (strain ATCC 15356 / DSM 50701 / NCIMB 9529 / HD100).